Reading from the N-terminus, the 454-residue chain is Cysteine--tRNA ligase (454 aa).

C27 lines the Zn(2+) pocket. Residues 29 to 39 carry the 'HIGH' region motif; that stretch reads PTVQDHFHIGH. Positions 207, 232, and 236 each coordinate Zn(2+). The 'KMSKS' region motif lies at 265–269; the sequence is KMSKS. K268 is an ATP binding site.

Belongs to the class-I aminoacyl-tRNA synthetase family. Zn(2+) serves as cofactor.

The protein localises to the cytoplasm. The enzyme catalyses tRNA(Cys) + L-cysteine + ATP = L-cysteinyl-tRNA(Cys) + AMP + diphosphate. The sequence is that of Cysteine--tRNA ligase from Thermoplasma volcanium (strain ATCC 51530 / DSM 4299 / JCM 9571 / NBRC 15438 / GSS1).